A 185-amino-acid polypeptide reads, in one-letter code: Ribosome-recycling factor (185 aa).

Belongs to the RRF family.

It is found in the cytoplasm. Its function is as follows. Responsible for the release of ribosomes from messenger RNA at the termination of protein biosynthesis. May increase the efficiency of translation by recycling ribosomes from one round of translation to another. The polypeptide is Ribosome-recycling factor (Shewanella piezotolerans (strain WP3 / JCM 13877)).